The following is a 512-amino-acid chain: Serine/threonine-protein kinase grp (512 aa).

The Protein kinase domain occupies 22–279 (WTLAQTLGEG…LEKTLDHKWC (258 aa)). ATP-binding positions include 28–36 (LGEGAYGEV) and K51. Residue D143 is the Proton acceptor of the active site. The interval 335–360 (PTMRSDDDFNVRLGSGRSKEDGGDRQ) is disordered.

The protein belongs to the protein kinase superfamily. CAMK Ser/Thr protein kinase family. NIM1 subfamily. Post-translationally, phosphorylated in a MEI-41/ATR dependent manner in response to DNA damage or the presence of unreplicated DNA.

Its subcellular location is the nucleus. It catalyses the reaction L-seryl-[protein] + ATP = O-phospho-L-seryl-[protein] + ADP + H(+). It carries out the reaction L-threonyl-[protein] + ATP = O-phospho-L-threonyl-[protein] + ADP + H(+). In terms of biological role, serine/threonine-protein kinase which is required for checkpoint-mediated cell cycle arrest and activation of DNA repair in response to the presence of DNA damage or unreplicated DNA. May also negatively regulate cell cycle progression during unperturbed cell cycles. May phosphorylate the CDC25 phosphatase stg, which promotes its degradation. This results in increased inhibitory tyrosine phosphorylation of Cdk1-cyclin complexes and consequent inhibition of cell cycle progression. This Drosophila melanogaster (Fruit fly) protein is Serine/threonine-protein kinase grp.